Reading from the N-terminus, the 935-residue chain is Progesterone receptor (935 aa).

The disordered stretch occupies residues 1 to 49 (MTELKAKGXRAPHVAGSPSSPKVXSPLPCRQAAXPFPGSQTSDTLPEVS). Residues 1–164 (MTELKAKGXR…SATQRVLSRL (164 aa)) form an AF3; mediates transcriptional activation region. The modulating, Pro-Rich stretch occupies residues 1–568 (MTELKAKGXR…YSFESLPQKI (568 aa)). The segment covering 17–28 (SPSSPKVXSPLP) has biased composition (low complexity). Position 20 is a phosphoserine (Ser20). Residues 55 to 59 (LDGLL) carry the LXXL motif 1 motif. A disordered region spans residues 61–255 (PRICQGQDPP…GAAAGGGAAA (195 aa)). A Phosphoserine modification is found at Ser81. Residues 115–119 (LDTLW) carry the LXXL motif 2 motif. Phosphoserine occurs at positions 130 and 162. A mediates transcriptional transrepression region spans residues 165–305 (MSRSGGKAGD…LATTVTDFIH (141 aa)). Positions 183–187 (KVLPR) match the Nuclear localization signal motif. Ser190 bears the Phosphoserine mark. Residues 191-203 (PSRQLLLPTTGSP) show a composition bias toward polar residues. Position 213 is a phosphoserine (Ser213). Over residues 220–231 (EVEEEDGSESED) the composition is skewed to acidic residues. Over residues 232–246 (SAGPLLKGKPRALGG) the composition is skewed to low complexity. Ser294 is subject to Phosphoserine; by MAPK1. A disordered region spans residues 331–365 (GGAGAASAFAPPRSSPSASSTPVPGGDFPDCAYAP). A compositionally biased stretch (low complexity) spans 335–356 (AASAFAPPRSSPSASSTPVPGG). A Phosphoserine; by MAPK modification is found at Ser345. A Glycyl lysine isopeptide (Lys-Gly) (interchain with G-Cter in SUMO); alternate cross-link involves residue Lys388. Residue Lys388 forms a Glycyl lysine isopeptide (Lys-Gly) (interchain with G-Cter in ubiquitin); alternate linkage. Ser400 carries the phosphoserine; by CDK2 modification. Residues 415–452 (PDFPLGPPPPLPPRAPPSRPGEAAVTAAPASASVSSAS) are disordered. Residues 418–433 (PLGPPPPLPPRAPPSR) are compositionally biased toward pro residues. Over residues 434 to 452 (PGEAAVTAAPASASVSSAS) the composition is skewed to low complexity. The segment at 456–548 (STLECILYKA…VYPPYLNYLR (93 aa)) is AF1; mediates transcriptional activation. Residue Lys533 forms a Glycyl lysine isopeptide (Lys-Gly) (interchain with G-Cter in SUMO) linkage. 2 NR C4-type zinc fingers span residues 569–589 (CLIC…CGSC) and 605–629 (CAGR…LRKC). The segment at residues 569–641 (CLICGDEASG…AGMVLGGRKF (73 aa)) is a DNA-binding region (nuclear receptor). Residue Ser678 is modified to Phosphoserine. Residues 681 to 915 (QDIQLIPPLI…EFPEMMSEVI (235 aa)) enclose the NR LBD domain. The AF2; mediates transcriptional activation stretch occupies residues 689-935 (LINLLLSIEP…MVKPLLFHKK (247 aa)).

The protein belongs to the nuclear hormone receptor family. Interacts with SMARD1 and UNC45A. Interacts with CUEDC2; the interaction promotes ubiquitination, decreases sumoylation, and represses transcriptional activity. Interacts with PIAS3; the interaction promotes sumoylation of PR in a hormone-dependent manner, inhibits DNA-binding, and alters nuclear export. Interacts with SP1; the interaction requires ligand-induced phosphorylation on Ser-345 by ERK1/2-MAPK. Interacts with PRMT2. Interacts with NCOA2 and NCOA1. Interacts with KLF9. Interacts with GTF2B. In terms of processing, phosphorylated on multiple serine sites. Several of these sites are hormone-dependent. Phosphorylation on Ser-294 is highly hormone-dependent and modulates ubiquitination and sumoylation on Lys-388. Phosphorylation on Ser-345 also requires induction by hormone. Basal phosphorylation on Ser-81, Ser-162, Ser-190 and Ser-400 is increased in response to progesterone and can be phosphorylated in vitro by the CDK2-A1 complex. Increased levels of phosphorylation on Ser-400 also in the presence of EGF, heregulin, IGF, PMA and FBS. Phosphorylation at this site by CDK2 is ligand-independent, and increases nuclear translocation and transcriptional activity. Phosphorylation at Ser-162 and Ser-294, but not at Ser-190, is impaired during the G(2)/M phase of the cell cycle. Phosphorylation on Ser-345 by ERK1/2 MAPK is required for interaction with SP1. Sumoylation is hormone-dependent and represses transcriptional activity. Sumoylation on all three sites is enhanced by PIAS3. Desumoylated by SENP1. Sumoylation on Lys-388, the main site of sumoylation, is repressed by ubiquitination on the same site, and modulated by phosphorylation at Ser-294. Post-translationally, ubiquitination is hormone-dependent and represses sumoylation on the same site. Promoted by MAPK-mediated phosphorylation on Ser-294. In terms of processing, palmitoylated by ZDHHC7 and ZDHHC21. Palmitoylation is required for plasma membrane targeting and for rapid intracellular signaling via ERK and AKT kinases and cAMP generation.

The protein localises to the nucleus. Its subcellular location is the cytoplasm. In terms of biological role, the steroid hormones and their receptors are involved in the regulation of eukaryotic gene expression and affect cellular proliferation and differentiation in target tissues. Transcriptional activator of several progesteron-dependent promoters in a variety of cell types. Involved in activation of SRC-dependent MAPK signaling on hormone stimulation. The polypeptide is Progesterone receptor (PGR) (Ateles paniscus (Black spider monkey)).